Here is a 79-residue protein sequence, read N- to C-terminus: uncharacterized protein (79 aa).

An N-terminal signal peptide occupies residues 1-33 (MRLIIRAIVLLALVWIGLLMSGYGILVGSKVNA).

This is an uncharacterized protein from Salmonella typhi.